The following is a 604-amino-acid chain: Lipoprotein LpqB (604 aa).

Positions 1–27 are cleaved as a signal peptide; sequence MTMRAARLSGSTGLTAALVAVLLVLTG. Cysteine 28 carries the N-palmitoyl cysteine lipid modification. Residue cysteine 28 is the site of S-diacylglycerol cysteine attachment. The tract at residues 35-60 is disordered; that stretch reads SAPQALGTIDREPTSEGPTPPIAGRD.

The protein belongs to the LpqB lipoprotein family.

The protein localises to the cell membrane. This chain is Lipoprotein LpqB, found in Nocardia farcinica (strain IFM 10152).